The primary structure comprises 495 residues: Aspartyl/glutamyl-tRNA(Asn/Gln) amidotransferase subunit B (495 aa).

It belongs to the GatB/GatE family. GatB subfamily. As to quaternary structure, heterotrimer of A, B and C subunits.

The catalysed reaction is L-glutamyl-tRNA(Gln) + L-glutamine + ATP + H2O = L-glutaminyl-tRNA(Gln) + L-glutamate + ADP + phosphate + H(+). It carries out the reaction L-aspartyl-tRNA(Asn) + L-glutamine + ATP + H2O = L-asparaginyl-tRNA(Asn) + L-glutamate + ADP + phosphate + 2 H(+). Allows the formation of correctly charged Asn-tRNA(Asn) or Gln-tRNA(Gln) through the transamidation of misacylated Asp-tRNA(Asn) or Glu-tRNA(Gln) in organisms which lack either or both of asparaginyl-tRNA or glutaminyl-tRNA synthetases. The reaction takes place in the presence of glutamine and ATP through an activated phospho-Asp-tRNA(Asn) or phospho-Glu-tRNA(Gln). This is Aspartyl/glutamyl-tRNA(Asn/Gln) amidotransferase subunit B from Methylocella silvestris (strain DSM 15510 / CIP 108128 / LMG 27833 / NCIMB 13906 / BL2).